The following is a 171-amino-acid chain: Terminase, small subunit (171 aa).

It belongs to the P23virus small terminase family. As to quaternary structure, homononamer; forms a ring-like structure through which genomic DNA is translocated into the capsid. Heterodimer with the terminase large subunit; the active complex is probably heterooligomeric.

Functionally, the terminase small subunit binds to the packaging initiation site and regulates the ATPase activity of the terminase large subunit. The terminase lies at a unique vertex of the procapsid and is composed of two subunits, a small terminase subunit involved in viral DNA recognition (packaging sequence), and a large terminase subunit. Both terminase subunits heterooligomerize and are docked on the portal protein to form the packaging machine. This is Terminase, small subunit from Thermus virus P23-45 (Thermus thermophilus phage P23-45).